Reading from the N-terminus, the 343-residue chain is Aspartate carbamoyltransferase catalytic subunit (343 aa).

Carbamoyl phosphate is bound by residues arginine 91 and threonine 92. An L-aspartate-binding site is contributed by lysine 119. Residues arginine 141, histidine 171, and glutamine 174 each contribute to the carbamoyl phosphate site. L-aspartate contacts are provided by arginine 204 and arginine 259. Residues glycine 300 and proline 301 each coordinate carbamoyl phosphate.

This sequence belongs to the aspartate/ornithine carbamoyltransferase superfamily. ATCase family. In terms of assembly, heterododecamer (2C3:3R2) of six catalytic PyrB chains organized as two trimers (C3), and six regulatory PyrI chains organized as three dimers (R2).

The catalysed reaction is carbamoyl phosphate + L-aspartate = N-carbamoyl-L-aspartate + phosphate + H(+). The protein operates within pyrimidine metabolism; UMP biosynthesis via de novo pathway; (S)-dihydroorotate from bicarbonate: step 2/3. Catalyzes the condensation of carbamoyl phosphate and aspartate to form carbamoyl aspartate and inorganic phosphate, the committed step in the de novo pyrimidine nucleotide biosynthesis pathway. This Burkholderia mallei (strain NCTC 10247) protein is Aspartate carbamoyltransferase catalytic subunit.